The following is a 318-amino-acid chain: MKLSEIAEFLSLEYKGEDIEISALNSLLKANFAELTYCDGEKNTKDIPHTGAAAILVSKEYENLVPKDTKVLITQSPHLSFAFLSKLFAKPLINTAKEKVQNIAKSARIMPNVYIGDNVNIGENVIIMAGAYIGDNVSIGDESIIHPNVVIYNDTKIGKKCHLLANCVIGSDGFGYAHNKNGEHYKIYHNGNVILEDFVEVGACTTIDRAVFDSTIIKAGTKVDNLVQIGHNCNIGQNCIIVAQTGISGSSELGRNVIMGGQSATSGHLKIGDFSTIAARGGVSKNLEGGRVYGGFPIMLQKDWLKLQAKIAMKFKKD.

His-231 (proton acceptor) is an active-site residue.

The protein belongs to the transferase hexapeptide repeat family. LpxD subfamily. In terms of assembly, homotrimer.

The catalysed reaction is a UDP-3-O-[(3R)-3-hydroxyacyl]-alpha-D-glucosamine + a (3R)-hydroxyacyl-[ACP] = a UDP-2-N,3-O-bis[(3R)-3-hydroxyacyl]-alpha-D-glucosamine + holo-[ACP] + H(+). It functions in the pathway bacterial outer membrane biogenesis; LPS lipid A biosynthesis. In terms of biological role, catalyzes the N-acylation of UDP-3-O-acylglucosamine using 3-hydroxyacyl-ACP as the acyl donor. Is involved in the biosynthesis of lipid A, a phosphorylated glycolipid that anchors the lipopolysaccharide to the outer membrane of the cell. The chain is UDP-3-O-acylglucosamine N-acyltransferase from Campylobacter jejuni subsp. doylei (strain ATCC BAA-1458 / RM4099 / 269.97).